The sequence spans 514 residues: Mitochondrial-processing peptidase subunit alpha (514 aa).

A mitochondrion-targeting transit peptide spans 1–55 (MLLRKSIPYIKICRDISASVRNNKEIAQKLPLSVPLPMENNSKSIEKGCPPMGRN).

The protein belongs to the peptidase M16 family. In terms of assembly, heterodimer of mppa-1 (alpha) and mppb-1 (beta) subunits, forming the mitochondrial processing protease (MPP) in which mppa-1 is involved in substrate recognition and binding and mppb-1 is the catalytic subunit.

The protein resides in the mitochondrion matrix. Its function is as follows. Substrate recognition and binding subunit of the essential mitochondrial processing protease (MPP), which cleaves the mitochondrial sequence off newly imported precursors proteins. This chain is Mitochondrial-processing peptidase subunit alpha, found in Caenorhabditis elegans.